Reading from the N-terminus, the 523-residue chain is Pituitary adenylate cyclase-activating polypeptide type I receptor (523 aa).

The N-terminal stretch at 1–19 is a signal peptide; sequence MARVLQLSLTALLLPVAIA. The Extracellular portion of the chain corresponds to 20–151; sequence MHSDCIFKKE…SGDQDYYYLS (132 aa). 3 disulfide bridges follow: Cys-33-Cys-62, Cys-53-Cys-117, and Cys-76-Cys-133. Residues Asn-47, Asn-59, and Asn-116 are each glycosylated (N-linked (GlcNAc...) asparagine). Residues 124–138 are important for ADCYAP1/PACAP ligand binding and specificity; the sequence is EPFPHYFDACGFDDY. The segment at 124 to 138 is important for ligand binding and specificity; sequence EPFPHYFDACGFDDY. A helical membrane pass occupies residues 152–176; it reads VKALYTVGYSTSLATLTTAMVILCR. Residues 177–186 lie on the Cytoplasmic side of the membrane; the sequence is FRKLHCTRNF. Residues 187-207 traverse the membrane as a helical segment; that stretch reads IHMNLFVSFMLRAISVFIKDW. At 208-222 the chain is on the extracellular side; that stretch reads ILYAEQDSSHCFVST. Residues 223–248 form a helical membrane-spanning segment; the sequence is VECKAVMVFFHYCVVSNYFWLFIEGL. Residues Cys-225 and Cys-295 are joined by a disulfide bond. Residues 249 to 266 are Cytoplasmic-facing; it reads YLFTLLVETFFPERRYFY. A helical membrane pass occupies residues 267–289; the sequence is WYTIIGWGTPTVCVTVWAVLRLY. Over 290 to 301 the chain is Extracellular; that stretch reads FDDAGCWDMNDS. A helical membrane pass occupies residues 302–328; the sequence is TALWWVIKGPVVGSIMVNFVLFIGIII. The Cytoplasmic portion of the chain corresponds to 329–346; the sequence is ILVQKLQSPDMGGNESSI. The helical transmembrane segment at 347-429 threads the bilayer; the sequence is YLTNLRLRVP…HYTVFAFSPE (83 aa). At 430–434 the chain is on the extracellular side; it reads NVSKR. The chain crosses the membrane as a helical span at residues 435 to 458; the sequence is ERLVFELGLGSFQGFVVAVLYCFL. Topologically, residues 459-523 are cytoplasmic; the sequence is NGEVQAEIKR…SSLPADNLAT (65 aa). Phosphoserine occurs at positions 489 and 502.

Belongs to the G-protein coupled receptor 2 family. As to quaternary structure, interacts with maxadilan, a vasodilator peptide from Lutzomyia longipalpis saliva; the interaction results in ADCYAP1R1 activation. In terms of tissue distribution, hypothalamus, anterior pituitary, adrenal medulla, testicular germ cells.

The protein localises to the cell membrane. G protein-coupled receptor activated by the neuropeptide pituitary adenylate cyclase-activating polypeptide (ADCYAP1/PACAP). Binds both PACAP27 and PACAP38 bioactive peptides. Ligand binding causes a conformation change that triggers signaling via guanine nucleotide-binding proteins (G proteins) and modulates the activity of downstream effectors. Activates cAMP-dependent pathway. May regulate the release of adrenocorticotropin, luteinizing hormone, growth hormone, prolactin, epinephrine, and catecholamine. May play a role in spermatogenesis and sperm motility. Causes smooth muscle relaxation and secretion in the gastrointestinal tract. This chain is Pituitary adenylate cyclase-activating polypeptide type I receptor, found in Rattus norvegicus (Rat).